The following is a 268-amino-acid chain: MGQKIHPTGFRLAVSRNWASRWYANNNNFAAMLQEDIGVREYLKKKLKNASVGRVVIERPAKNARITIFSSRPGVVIGKKGEDIELLKSELQKRMGVPVHVNIEEIRKPETDAQLIADSITQQLERRIMFRRAMKRAMQNAMRLGAQGIKIMSAGRLNGIEIARTEWYREGRVPLHTLRADIDYATSEAKTTYGIIGVKVWVYKGDTLGRNDAPVVEEVAEEKRPRRNARPGGDRRPRRDGEGGGPAGARRGAPRRAGGAGGDGKTGE.

Residues 39–107 (VREYLKKKLK…PVHVNIEEIR (69 aa)) form the KH type-2 domain. The disordered stretch occupies residues 216 to 268 (VEEVAEEKRPRRNARPGGDRRPRRDGEGGGPAGARRGAPRRAGGAGGDGKTGE). Residues 232 to 242 (GGDRRPRRDGE) are compositionally biased toward basic and acidic residues. The segment covering 248–257 (GARRGAPRRA) has biased composition (low complexity). The span at 258–268 (GGAGGDGKTGE) shows a compositional bias: gly residues.

Belongs to the universal ribosomal protein uS3 family. In terms of assembly, part of the 30S ribosomal subunit. Forms a tight complex with proteins S10 and S14.

In terms of biological role, binds the lower part of the 30S subunit head. Binds mRNA in the 70S ribosome, positioning it for translation. The sequence is that of Small ribosomal subunit protein uS3 from Paraburkholderia phytofirmans (strain DSM 17436 / LMG 22146 / PsJN) (Burkholderia phytofirmans).